Here is a 672-residue protein sequence, read N- to C-terminus: MSKLARLEREEIMECQVMWEPDSKKDTQMDRFRAAVGTACGLALGNYNDLYHWSVRSYMDFWAEFWKFSGIVYSRMYDEVVDTSKGIADVPEWFRGSRLNYAENLLRHKENDRVALYVAREGREEIVKVTFEELRQQVALFAAAMRKMGVKKGDRVVGYLPNSAHAVEAMLAAASIGAIWSSTSPDFGVNGVLDRFSQIQPKLIFSVEAVVYNGKEHGHLEKLQRVVKGLPDLQRVVLIPYVLPREKIDISKIPNSVFLDDFLASGTGAQAPQLEFEQLPFSHPLFIMFSSGTTGAPKCMVHSAGGTLIQHLKEHMLHGNMTSSDILLYYTTVGWMMWNWMVSALATGASLVLYDGSPLVPTPNVLWDLVDRIGITILGTGAKWLSVLEEKDMKPVETHNLHTLHTILSTGSPLKAQSYEYVYRCIKSSVLLGSISGGTDIISCFMGQNSSIPVYKGEIQARNLGMAVEAWDEEGKAVWGASGELVCTKPIPCQPTHFWNDENGSKYRKAYFSKFPGVWAHGDYCRINPKTGGIIMLGRSDGTLNPNGVRFGSSEIYNIVEAFDEVEDSLCVPQYNRDGEERVVLFLKMASGHTFQPDLVKRIRDAIRLGLSARHVPSLILETRGIPYTLNGKKVEVAVKQVMAGRTVEHRGAFSNPETLDLYRDIPELQDF.

This sequence belongs to the ATP-dependent AMP-binding enzyme family.

It is found in the cytoplasm. It localises to the cytosol. It catalyses the reaction acetoacetate + ATP + CoA = acetoacetyl-CoA + AMP + diphosphate. Its function is as follows. Converts acetoacetate to acetoacetyl-CoA in the cytosol. Ketone body-utilizing enzyme, responsible for the synthesis of cholesterol and fatty acids. This is Acetoacetyl-CoA synthetase (Aacs) from Mus musculus (Mouse).